A 134-amino-acid polypeptide reads, in one-letter code: ATP synthase epsilon chain (134 aa).

The protein belongs to the ATPase epsilon chain family. In terms of assembly, F-type ATPases have 2 components, CF(1) - the catalytic core - and CF(0) - the membrane proton channel. CF(1) has five subunits: alpha(3), beta(3), gamma(1), delta(1), epsilon(1). CF(0) has three main subunits: a, b and c.

It localises to the cell inner membrane. In terms of biological role, produces ATP from ADP in the presence of a proton gradient across the membrane. The sequence is that of ATP synthase epsilon chain from Syntrophobacter fumaroxidans (strain DSM 10017 / MPOB).